A 159-amino-acid polypeptide reads, in one-letter code: Phosphopantetheine adenylyltransferase (159 aa).

Residue Thr9 coordinates substrate. Residues 9-10 and His17 contribute to the ATP site; that span reads TF. Residues Lys41, Leu73, and Arg87 each contribute to the substrate site. Residues 88–90, Glu98, and 123–129 contribute to the ATP site; these read GLR and YSFISST.

This sequence belongs to the bacterial CoaD family. As to quaternary structure, homohexamer. It depends on Mg(2+) as a cofactor.

Its subcellular location is the cytoplasm. The enzyme catalyses (R)-4'-phosphopantetheine + ATP + H(+) = 3'-dephospho-CoA + diphosphate. It functions in the pathway cofactor biosynthesis; coenzyme A biosynthesis; CoA from (R)-pantothenate: step 4/5. Reversibly transfers an adenylyl group from ATP to 4'-phosphopantetheine, yielding dephospho-CoA (dPCoA) and pyrophosphate. This is Phosphopantetheine adenylyltransferase from Pseudomonas fluorescens (strain ATCC BAA-477 / NRRL B-23932 / Pf-5).